Consider the following 524-residue polypeptide: Methyl-CpG-binding domain-containing protein 8 (524 aa).

Residues 45–60 (CSSLSPSSSASLAASA) show a composition bias toward low complexity. Positions 45 to 151 (CSSLSPSSSA…EEELEDNEGQ (107 aa)) are disordered. Polar residues predominate over residues 75–84 (FNESAGSRKQ). The span at 106-116 (RQRDDSSREEQ) shows a compositional bias: basic and acidic residues. The span at 136-149 (EEEDEGEEELEDNE) shows a compositional bias: acidic residues. The region spanning 334-406 (VVNACDYGGY…QHYYLQSDNK (73 aa)) is the MBD domain.

In terms of tissue distribution, expressed in shoot meristems, roots (vasculature and tips), hypocotyls (vasculature), cotyledons (vasculature and hydathodes), young leaves, buds, flowers and stems. Detected in stomata.

The protein localises to the nucleus. Functionally, probable transcriptional regulator. May regulates developmental traits such as flowering time. The polypeptide is Methyl-CpG-binding domain-containing protein 8 (MBD8) (Arabidopsis thaliana (Mouse-ear cress)).